The primary structure comprises 564 residues: MQHETKMENQSWLKKLARRLGPGHVVNLCFIVVLLFSTLLTWREVVVLEDAYISSQRNHLENVANALDKHLQYNVDKLIFLRNGMREALVAPLDFTSLRDAVTEFEQHRDEHAWKIELNRRRTLPVNGVSDALVSEGNLLSRENESLDNEITAALEVGYLLRLAHNSSSMVEQAMYVSRAGFYVSTQPTLFTRNVPTRYYGYVTQPWFIGHSQRENRHRAVRWFTSQPEHASNTEPQVTVSVPVDSNNYWYGVLGMSIPVRTMQQFLRNAIDKNLDGEYQLYDSKLRFLTSSNPDHPTGNIFDPRELALLAQAMEHDTRGGIRMDSRYVSWERLDHFDGVLVRVHTLSEGVRGDFGSISIALTLLWALFTTMLLISWYVIRRMVSNMYVLQSSLQWQAWHDTLTRLYNRGALFEKARPLAKLCQTHQHPFSVIQVDLDHFKAINDRFGHQAGDRVLSHAAGLISSSLRAQDVAGRVGGEEFCVILPGASLTEAAEVAERIRLKLNEKEMLIAKSTTIRISASLGVSSSEETGDYDFEQLQSLADRRLYLAKQAGRNRVFASDNA.

The next 2 helical transmembrane spans lie at Leu-20–Leu-40 and Ile-360–Ile-380. The 136-residue stretch at His-428–Asn-563 folds into the GGDEF domain. Asp-436 is a Mg(2+) binding site. The substrate site is built by Asn-444, His-449, and Asp-453. Residue Glu-479 participates in Mg(2+) binding. Glu-479 acts as the Proton acceptor in catalysis.

As to quaternary structure, homodimer. It depends on Mg(2+) as a cofactor.

The protein resides in the cell inner membrane. The enzyme catalyses 2 GTP = 3',3'-c-di-GMP + 2 diphosphate. Its pathway is glycan metabolism; bacterial cellulose biosynthesis. It participates in purine metabolism; 3',5'-cyclic di-GMP biosynthesis. In terms of biological role, catalyzes the synthesis of cyclic-di-GMP (c-di-GMP) via the condensation of 2 GTP molecules. Cyclic-di-GMP is a second messenger which controls cell surface-associated traits in bacteria. Involved in the regulation of cellulose production. The protein is Probable diguanylate cyclase DgcQ of Escherichia coli (strain K12).